The primary structure comprises 251 residues: UPF0309 protein SCO4393 (251 aa).

The region spanning 36–220 (LADTVQNGGR…AATLADRGIE (185 aa)) is the SIS domain.

Belongs to the UPF0309 family.

The polypeptide is UPF0309 protein SCO4393 (Streptomyces coelicolor (strain ATCC BAA-471 / A3(2) / M145)).